The chain runs to 361 residues: Geranylgeranyl pyrophosphate synthase 3 (361 aa).

The tract at residues 44–63 is disordered; it reads DSNGSKELAPNGAQSRVQKP. Positions 81, 84, and 113 each coordinate isopentenyl diphosphate. Mg(2+) is bound by residues Asp120 and Asp124. Arg129 contributes to the dimethylallyl diphosphate binding site. An isopentenyl diphosphate-binding site is contributed by Arg130. Dimethylallyl diphosphate contacts are provided by Lys207, Thr208, and Gln244. Asp247 lines the Mg(2+) pocket. Positions 251, 261, and 271 each coordinate dimethylallyl diphosphate.

Belongs to the FPP/GGPP synthase family. Requires Mg(2+) as cofactor.

It carries out the reaction isopentenyl diphosphate + dimethylallyl diphosphate = (2E)-geranyl diphosphate + diphosphate. The enzyme catalyses isopentenyl diphosphate + (2E)-geranyl diphosphate = (2E,6E)-farnesyl diphosphate + diphosphate. It catalyses the reaction isopentenyl diphosphate + (2E,6E)-farnesyl diphosphate = (2E,6E,10E)-geranylgeranyl diphosphate + diphosphate. Functionally, geranylgeranyl pyrophosphate synthase; part of the gene cluster 25 that mediates the biosynthesis of an isoprenoid secondary metabolite. In Zymoseptoria tritici (strain CBS 115943 / IPO323) (Speckled leaf blotch fungus), this protein is Geranylgeranyl pyrophosphate synthase 3 (GGS3).